Reading from the N-terminus, the 1123-residue chain is Leucine-rich repeat receptor-like protein kinase PEPR1 (1123 aa).

Residues 1 to 28 (MKNLGGLFKILLLFFCLFLSTHIISVSC) form the signal peptide. The Extracellular portion of the chain corresponds to 29 to 769 (LNSDGLTLLS…SRKSGLSTWQ (741 aa)). One copy of the LRR 1 repeat lies at 31-53 (SDGLTLLSLLKHLDRVPPQVTST). Asn57, Asn81, Asn110, and Asn121 each carry an N-linked (GlcNAc...) asparagine glycan. LRR repeat units follow at residues 74–98 (SKNVASLNFTRSRVSGQLGPEIGEL), 99–122 (KSLQILDLSTNNFSGTIPSTLGNC), 124–145 (KLATLDLSENGFSDKIPDTLDS), 146–170 (LKRLEVLYLYINFLTGELPESLFRI), 171–194 (PKLQVLYLDYNNLTGPIPQSIGDA), 196–218 (ELVELSMYANQFSGNIPESIGNS), and 219–243 (SSLQILYLHRNKLVGSLPESLNLLG). Residues Asn182 and Asn217 are each glycosylated (N-linked (GlcNAc...) asparagine). N-linked (GlcNAc...) asparagine glycosylation is found at Asn244, Asn252, Asn289, Asn302, Asn316, Asn321, and Asn337. LRR repeat units lie at residues 245–266 (LTTLFVGNNSLQGPVRFGSPNC), 267–290 (KNLLTLDLSYNEFEGGVPPALGNC), 292–314 (SLDALVIVSGNLSGTIPSSLGML), 315–338 (KNLTILNLSENRLSGSIPAELGNC), 340–362 (SLNLLKLNDNQLVGGIPSALGKL), 363–386 (RKLESLELFENRFSGEIPIEIWKS), 388–410 (SLTQLLVYQNNLTGELPVEMTEM), 412–434 (KLKIATLFNNSFYGAIPPGLGVN), 435–458 (SSLEEVDFIGNKLTGEIPPNLCHG), 459–482 (RKLRILNLGSNLLHGTIPASIGHC), 484–505 (TIRRFILRENNLSGLLPEFSQD), 506–529 (HSLSFLDFNSNNFEGPIPGSLGSC), 530–553 (KNLSSINLSRNRFTGQIPPQLGNL), 554–577 (QNLGYMNLSRNLLEGSLPAQLSNC), 579–600 (SLERFDVGFNSLNGSVPSNFSN), 601–625 (WKGLTTLVLSENRFSGGIPQFLPEL), 626–650 (KKLSTLQIARNAFGGEIPSSIGLIE), 652–674 (LIYDLDLSGNGLTGEIPAKLGDL), 675–696 (IKLTRLNISNNNLTGSLSVLKG), and 697–721 (LTSLLHVDVSNNQFTGPIPDNLEGQ). Asn398, Asn420, and Asn434 each carry an N-linked (GlcNAc...) asparagine glycan. The N-linked (GlcNAc...) asparagine glycan is linked to Asn494. N-linked (GlcNAc...) asparagine glycosylation is found at Asn531, Asn536, Asn560, Asn591, and Asn597. Residues Asn681 and Asn686 are each glycosylated (N-linked (GlcNAc...) asparagine). The N-linked (GlcNAc...) asparagine glycan is linked to Asn745. Residues 770-790 (IVLIAVLSSLLVLVVVLALVF) traverse the membrane as a helical segment. The Cytoplasmic portion of the chain corresponds to 791 to 1123 (ICLRRRKGRP…ARSCSSDSVR (333 aa)). Thr824 is modified (phosphothreonine). Positions 827 to 1115 (LNEKYTIGRG…LLEDVKHLAR (289 aa)) constitute a Protein kinase domain. ATP contacts are provided by residues 833-841 (IGRGAHGIV) and Lys855. Phosphotyrosine is present on residues Tyr901 and Tyr941. The active-site Proton acceptor is Asp954. Phosphotyrosine is present on Tyr995.

The protein belongs to the protein kinase superfamily. Ser/Thr protein kinase family. As to quaternary structure, interacts with PEP1 and BAK1. Interacts with BIK1 and PBL1. N-glycosylated.

It is found in the cell membrane. The catalysed reaction is L-seryl-[protein] + ATP = O-phospho-L-seryl-[protein] + ADP + H(+). The enzyme catalyses L-threonyl-[protein] + ATP = O-phospho-L-threonyl-[protein] + ADP + H(+). Acts as a receptor for PEP defense peptides. Unlike typical immune receptors, senses an endogenous elicitor that potentiates pathogen-associated molecular pattern (PAMP)-inducible plant responses. Involved in PAMP-triggered immunity (PTI) signaling. Interacts with and phosphorylates the kinase BIK1, a central rate-limiting kinase in PTI signaling. In Arabidopsis thaliana (Mouse-ear cress), this protein is Leucine-rich repeat receptor-like protein kinase PEPR1 (PEPR1).